The primary structure comprises 408 residues: Heparan-sulfate 6-O-sulfotransferase 1 (408 aa).

The Cytoplasmic portion of the chain corresponds to 8–14 (MVERTSK). The helical; Signal-anchor for type II membrane protein transmembrane segment at 15 to 35 (FLLIVAASVCFMLILYQYVGP) threads the bilayer. The Lumenal portion of the chain corresponds to 36 to 408 (GLSLGAPSGR…DYMSHIIEKW (373 aa)). Residue 90–98 (HIQKTGGTT) participates in 3'-phosphoadenylyl sulfate binding. Residues 120–121 (KK), Arg-137, Trp-142, and His-147 contribute to the substrate site. The Proton acceptor role is filled by His-147. Positions 182 and 190 each coordinate 3'-phosphoadenylyl sulfate. Positions 194 and 201 each coordinate substrate. N-linked (GlcNAc...) asparagine glycosylation is present at Asn-261. A 3'-phosphoadenylyl sulfate-binding site is contributed by 314–316 (MQY). N-linked (GlcNAc...) asparagine glycosylation is present at Asn-317. 320-321 (RA) provides a ligand contact to 3'-phosphoadenylyl sulfate. N-linked (GlcNAc...) asparagine glycosylation is present at Asn-328. Positions 348–382 (AKDLFQQRYQYKRQLERMEQRIKNREERLLHRSNE) form a coiled coil. A disordered region spans residues 376 to 396 (LLHRSNEALPKEETEEQGRLP).

It belongs to the sulfotransferase 6 family. In terms of processing, N-glycosylated.

The protein resides in the membrane. The catalysed reaction is alpha-D-glucosaminyl-[heparan sulfate](n) + 3'-phosphoadenylyl sulfate = 6-sulfo-alpha-D-glucosaminyl-[heparan sulfate](n) + adenosine 3',5'-bisphosphate + H(+). Functionally, 6-O-sulfation enzyme which catalyzes the transfer of sulfate from 3'-phosphoadenosine 5'-phosphosulfate (PAPS) to position 6 of the N-sulfoglucosamine residue (GlcNS) of heparan sulfate. May also play a role in limb development. In Gallus gallus (Chicken), this protein is Heparan-sulfate 6-O-sulfotransferase 1.